Consider the following 265-residue polypeptide: MSCQTQLLSASEAALGEDFLSALSTDLDNWALFLDIDGTLLDLAETPDAVAVPPSLPASLDHLSKKLGGALALVTGRGLDYADQLFSPANFPIAGLHGAERRDPDGRVHKAAETADFERLKAELVAATASWAGVLIEDKGAAVAAHYRLAPDRQLELEQLMEWALYRAGPDWAIQHGKMVVEIRPARANKGDAVAAFLGQPPFAGRRAIAIGDDVTDEAMFRTVNRLGGLSIRIGPPVPASEALGSIPSAEALRGIIAALALLNI.

Asp-35 (nucleophile) is an active-site residue. Residues Asp-35, Asp-37, and Asp-213 each coordinate Mg(2+). Residue 35–37 (DID) participates in substrate binding.

Belongs to the trehalose phosphatase family. Mg(2+) serves as cofactor.

The catalysed reaction is alpha,alpha-trehalose 6-phosphate + H2O = alpha,alpha-trehalose + phosphate. The protein operates within glycan biosynthesis; trehalose biosynthesis. In terms of biological role, removes the phosphate from trehalose 6-phosphate to produce free trehalose. This Sinorhizobium fredii (strain NBRC 101917 / NGR234) protein is Probable trehalose-phosphate phosphatase (otsB).